We begin with the raw amino-acid sequence, 328 residues long: RING finger protein 175 (328 aa).

The next 5 helical transmembrane spans lie at 51–71 (MHVE…IVLV), 83–103 (LVTL…LYWW), 104–121 (RFLS…YILF), 149–169 (AFGV…NLFF), and 180–200 (GIVS…FAEI). The RING-type; atypical zinc-finger motif lies at 227 to 277 (CAVCGQKIIVELDEEGLIENTYQLSCNHVFHEFCIRGWCIVGKKQTCPYCK).

The protein resides in the membrane. The polypeptide is RING finger protein 175 (RNF175) (Homo sapiens (Human)).